A 162-amino-acid polypeptide reads, in one-letter code: Nucleotide-binding protein Mpe_A3039 (162 aa).

Belongs to the YajQ family.

Nucleotide-binding protein. This is Nucleotide-binding protein Mpe_A3039 from Methylibium petroleiphilum (strain ATCC BAA-1232 / LMG 22953 / PM1).